The chain runs to 555 residues: F-box only protein 33 (555 aa).

Residues 65-111 (AAGAASLPSELIVHIFSFLPAPDRLRASASCSHWRECLFYPALWPQL) enclose the F-box domain.

Part of the SCF (SKP1-CUL1-F-box) E3 ubiquitin-protein ligase complex SCF(FBXO33) formed of CUL1, SKP1, RBX1 and FBXO33. Interacts via its N-terminus with YBX1 CSD domain. Directly interacts with SKP1 and CUL1.

It participates in protein modification; protein ubiquitination. Functionally, substrate recognition component of a SCF (SKP1-CUL1-F-box protein) E3 ubiquitin-protein ligase complex which mediates the ubiquitination and subsequent proteasomal degradation of target proteins. Probably recognizes and binds to phosphorylated target proteins. Recognizes YBX1. The protein is F-box only protein 33 (FBXO33) of Homo sapiens (Human).